A 345-amino-acid chain; its full sequence is Probable velvet family sexual development regulator LACBIDRAFT_317102 (345 aa).

Composition is skewed to polar residues over residues 1–13 (MFTT…SYRS) and 24–38 (EIQN…NPPR). Disordered regions lie at residues 1–43 (MFTT…TRRR), 138–189 (ESWT…SPSS), and 310–345 (RKRR…SDED). Residues 62 to 306 (GQTIRAELDE…ARWGVRLNIR (245 aa)) enclose the Velvet domain. Composition is skewed to low complexity over residues 141 to 158 (TSRS…PTLS) and 167 to 184 (SSPQ…ASTP). Over residues 336-345 (SEDDEASDED) the composition is skewed to acidic residues.

Belongs to the velvet family.

It is found in the nucleus. Its function is as follows. Velvet-domain-containing protein that probably acts as a positive regulator of sexual development. The protein is Probable velvet family sexual development regulator LACBIDRAFT_317102 of Laccaria bicolor (strain S238N-H82 / ATCC MYA-4686) (Bicoloured deceiver).